The following is a 130-amino-acid chain: Small ribosomal subunit protein uS11 (130 aa).

The protein belongs to the universal ribosomal protein uS11 family. Part of the 30S ribosomal subunit. Interacts with proteins S7 and S18. Binds to IF-3.

Located on the platform of the 30S subunit, it bridges several disparate RNA helices of the 16S rRNA. Forms part of the Shine-Dalgarno cleft in the 70S ribosome. This chain is Small ribosomal subunit protein uS11, found in Nitrobacter hamburgensis (strain DSM 10229 / NCIMB 13809 / X14).